Consider the following 352-residue polypeptide: Photosystem II D2 protein (352 aa).

A helical membrane pass occupies residues 40–60 (CAYLALGGWLTGTTFVTSWYT). Histidine 117 provides a ligand contact to chlorophyll a. A helical transmembrane segment spans residues 124–140 (GFMLRQFEIARLVGVRP). Pheophytin a is bound by residues glutamine 129 and asparagine 142. The chain crosses the membrane as a helical span at residues 152-165 (VFVSVFLIYPLGQS). Histidine 197 is a chlorophyll a binding site. Residues 207 to 227 (GALLCAIHGATVENTLFQDGE) form a helical membrane-spanning segment. Positions 214 and 261 each coordinate a plastoquinone. A Fe cation-binding site is contributed by histidine 214. Histidine 268 serves as a coordination point for Fe cation. The chain crosses the membrane as a helical span at residues 278-294 (GLWMSSIGVVGLALNLR).

It belongs to the reaction center PufL/M/PsbA/D family. PSII is composed of 1 copy each of membrane proteins PsbA, PsbB, PsbC, PsbD, PsbE, PsbF, PsbH, PsbI, PsbJ, PsbK, PsbL, PsbM, PsbT, PsbX, PsbY, PsbZ, Psb30/Ycf12, peripheral proteins PsbO, CyanoQ (PsbQ), PsbU, PsbV and a large number of cofactors. It forms dimeric complexes. The D1/D2 heterodimer binds P680, chlorophylls that are the primary electron donor of PSII, and subsequent electron acceptors. It shares a non-heme iron and each subunit binds pheophytin, quinone, additional chlorophylls, carotenoids and lipids. There is also a Cl(-1) ion associated with D1 and D2, which is required for oxygen evolution. The PSII complex binds additional chlorophylls, carotenoids and specific lipids. serves as cofactor.

Its subcellular location is the cellular thylakoid membrane. It carries out the reaction 2 a plastoquinone + 4 hnu + 2 H2O = 2 a plastoquinol + O2. Photosystem II (PSII) is a light-driven water:plastoquinone oxidoreductase that uses light energy to abstract electrons from H(2)O, generating O(2) and a proton gradient subsequently used for ATP formation. It consists of a core antenna complex that captures photons, and an electron transfer chain that converts photonic excitation into a charge separation. The D1/D2 (PsbA/PsbD) reaction center heterodimer binds P680, the primary electron donor of PSII as well as several subsequent electron acceptors. D2 is needed for assembly of a stable PSII complex. This is Photosystem II D2 protein from Synechococcus sp. (strain JA-2-3B'a(2-13)) (Cyanobacteria bacterium Yellowstone B-Prime).